Reading from the N-terminus, the 482-residue chain is tRNA sulfurtransferase (482 aa).

Residues 61–165 enclose the THUMP domain; sequence DVTLSVLTQT…NDKLNLIIAR (105 aa). ATP contacts are provided by residues 183–184, K265, G287, and Q296; that span reads LI. An intrachain disulfide couples C344 to C456. One can recognise a Rhodanese domain in the interval 404–482; it reads LGSDVVVLDI…GYKNVKVYRP (79 aa). C456 acts as the Cysteine persulfide intermediate in catalysis.

The protein belongs to the ThiI family.

It localises to the cytoplasm. It carries out the reaction [ThiI sulfur-carrier protein]-S-sulfanyl-L-cysteine + a uridine in tRNA + 2 reduced [2Fe-2S]-[ferredoxin] + ATP + H(+) = [ThiI sulfur-carrier protein]-L-cysteine + a 4-thiouridine in tRNA + 2 oxidized [2Fe-2S]-[ferredoxin] + AMP + diphosphate. The enzyme catalyses [ThiS sulfur-carrier protein]-C-terminal Gly-Gly-AMP + S-sulfanyl-L-cysteinyl-[cysteine desulfurase] + AH2 = [ThiS sulfur-carrier protein]-C-terminal-Gly-aminoethanethioate + L-cysteinyl-[cysteine desulfurase] + A + AMP + 2 H(+). It functions in the pathway cofactor biosynthesis; thiamine diphosphate biosynthesis. Functionally, catalyzes the ATP-dependent transfer of a sulfur to tRNA to produce 4-thiouridine in position 8 of tRNAs, which functions as a near-UV photosensor. Also catalyzes the transfer of sulfur to the sulfur carrier protein ThiS, forming ThiS-thiocarboxylate. This is a step in the synthesis of thiazole, in the thiamine biosynthesis pathway. The sulfur is donated as persulfide by IscS. The polypeptide is tRNA sulfurtransferase (Aliivibrio fischeri (strain MJ11) (Vibrio fischeri)).